The chain runs to 282 residues: Bifunctional protein FolD (282 aa).

Residues 162-164 (GRS), serine 187, and valine 228 each bind NADP(+).

The protein belongs to the tetrahydrofolate dehydrogenase/cyclohydrolase family. Homodimer.

The catalysed reaction is (6R)-5,10-methylene-5,6,7,8-tetrahydrofolate + NADP(+) = (6R)-5,10-methenyltetrahydrofolate + NADPH. It carries out the reaction (6R)-5,10-methenyltetrahydrofolate + H2O = (6R)-10-formyltetrahydrofolate + H(+). The protein operates within one-carbon metabolism; tetrahydrofolate interconversion. Catalyzes the oxidation of 5,10-methylenetetrahydrofolate to 5,10-methenyltetrahydrofolate and then the hydrolysis of 5,10-methenyltetrahydrofolate to 10-formyltetrahydrofolate. This chain is Bifunctional protein FolD, found in Thermus thermophilus (strain ATCC 27634 / DSM 579 / HB8).